A 298-amino-acid chain; its full sequence is Thymidylate synthase (298 aa).

DUMP-binding positions include Arg25 and 159–160 (RR). Cys179 acts as the Nucleophile in catalysis. DUMP contacts are provided by residues 200–203 (RSVD), Asn211, and 241–243 (HLY). Asp203 provides a ligand contact to (6R)-5,10-methylene-5,6,7,8-tetrahydrofolate. Ala297 contributes to the (6R)-5,10-methylene-5,6,7,8-tetrahydrofolate binding site.

It belongs to the thymidylate synthase family. Bacterial-type ThyA subfamily. As to quaternary structure, homodimer.

Its subcellular location is the cytoplasm. The catalysed reaction is dUMP + (6R)-5,10-methylene-5,6,7,8-tetrahydrofolate = 7,8-dihydrofolate + dTMP. Its pathway is pyrimidine metabolism; dTTP biosynthesis. In terms of biological role, catalyzes the reductive methylation of 2'-deoxyuridine-5'-monophosphate (dUMP) to 2'-deoxythymidine-5'-monophosphate (dTMP) while utilizing 5,10-methylenetetrahydrofolate (mTHF) as the methyl donor and reductant in the reaction, yielding dihydrofolate (DHF) as a by-product. This enzymatic reaction provides an intracellular de novo source of dTMP, an essential precursor for DNA biosynthesis. This is Thymidylate synthase from Cereibacter sphaeroides (strain ATCC 17023 / DSM 158 / JCM 6121 / CCUG 31486 / LMG 2827 / NBRC 12203 / NCIMB 8253 / ATH 2.4.1.) (Rhodobacter sphaeroides).